The following is a 107-amino-acid chain: Probable monothiol glutaredoxin 2 (107 aa).

The Glutaredoxin domain occupies 7–107; sequence LEFIQNAIKK…LEKMLKDVVV (101 aa). Lysine 24 lines the glutathione pocket. Cysteine 32 is a binding site for [2Fe-2S] cluster. Glutathione is bound by residues arginine 61, phenylalanine 73, and 86–87; that span reads CD.

The protein belongs to the glutaredoxin family. Monothiol subfamily.

This Rickettsia prowazekii (strain Madrid E) protein is Probable monothiol glutaredoxin 2 (grxC2).